Consider the following 63-residue polypeptide: Bowman-Birk type proteinase inhibitor B-II (63 aa).

7 disulfides stabilise this stretch: Cys5–Cys62, Cys6–Cys23, Cys9–Cys57, Cys11–Cys21, Cys30–Cys37, Cys34–Cys49, and Cys39–Cys47.

This sequence belongs to the Bowman-Birk serine protease inhibitor family.

The protein is Bowman-Birk type proteinase inhibitor B-II of Arachis hypogaea (Peanut).